A 715-amino-acid polypeptide reads, in one-letter code: ATP-dependent DNA helicase Hel308 (715 aa).

The Q motif motif lies at 8–36 (MPIEDLKLPSNVIEIIKKRGIKKLNPPQT). Residues Q35 and 53 to 60 (SPTGSGKT) each bind ATP. Positions 40–203 (KKGLLEGNRL…WLGAEPVATN (164 aa)) constitute a Helicase ATP-binding domain. The short motif at 152–155 (DELH) is the DEAH box element. Positions 236–442 (HGDDAIIAYT…ERAFYTFLLG (207 aa)) constitute a Helicase C-terminal domain.

The protein belongs to the helicase family. Hel308 subfamily. In terms of assembly, monomer.

It catalyses the reaction Couples ATP hydrolysis with the unwinding of duplex DNA by translocating in the 3'-5' direction.. The catalysed reaction is ATP + H2O = ADP + phosphate + H(+). Its function is as follows. DNA-dependent ATPase and 3'-5' DNA helicase that may be involved in repair of stalled replication forks. A low processivity 3'-5' helicase. Unwinds short dsDNA substrates with 3'-overhangs (25 bp dsDNA with 25 base overhang), less active on longer dsDNA substrates. Also unwinds the lagging strand of a stalled replication fork (but the leading strand was not tested). Binds ssDNA, but dsDNA about 35-fold less well. Able to displace streptavidin from biotinylated ssDNA, which is partially inhibited by DNA-binding proteins, suggesting it may play a role in stripping proteins from stalled replication forks. In Saccharolobus solfataricus (strain 98/2) (Sulfolobus solfataricus), this protein is ATP-dependent DNA helicase Hel308.